A 293-amino-acid chain; its full sequence is Indole-3-glycerol phosphate synthase (293 aa).

Belongs to the TrpC family.

It catalyses the reaction 1-(2-carboxyphenylamino)-1-deoxy-D-ribulose 5-phosphate + H(+) = (1S,2R)-1-C-(indol-3-yl)glycerol 3-phosphate + CO2 + H2O. Its pathway is amino-acid biosynthesis; L-tryptophan biosynthesis; L-tryptophan from chorismate: step 4/5. The sequence is that of Indole-3-glycerol phosphate synthase from Rippkaea orientalis (strain PCC 8801 / RF-1) (Cyanothece sp. (strain PCC 8801)).